The chain runs to 409 residues: Phosphopentomutase (409 aa).

Mn(2+)-binding residues include Asp-10, Asp-302, His-307, Asp-343, His-344, and His-355.

The protein belongs to the phosphopentomutase family. It depends on Mn(2+) as a cofactor.

The protein localises to the cytoplasm. It catalyses the reaction 2-deoxy-alpha-D-ribose 1-phosphate = 2-deoxy-D-ribose 5-phosphate. The enzyme catalyses alpha-D-ribose 1-phosphate = D-ribose 5-phosphate. Its pathway is carbohydrate degradation; 2-deoxy-D-ribose 1-phosphate degradation; D-glyceraldehyde 3-phosphate and acetaldehyde from 2-deoxy-alpha-D-ribose 1-phosphate: step 1/2. Isomerase that catalyzes the conversion of deoxy-ribose 1-phosphate (dRib-1-P) and ribose 1-phosphate (Rib-1-P) to deoxy-ribose 5-phosphate (dRib-5-P) and ribose 5-phosphate (Rib-5-P), respectively. In Chelativorans sp. (strain BNC1), this protein is Phosphopentomutase.